Here is a 556-residue protein sequence, read N- to C-terminus: 2-succinyl-5-enolpyruvyl-6-hydroxy-3-cyclohexene-1-carboxylate synthase (556 aa).

The protein belongs to the TPP enzyme family. MenD subfamily. Homodimer. The cofactor is Mg(2+). Mn(2+) is required as a cofactor. Thiamine diphosphate serves as cofactor.

It carries out the reaction isochorismate + 2-oxoglutarate + H(+) = 5-enolpyruvoyl-6-hydroxy-2-succinyl-cyclohex-3-ene-1-carboxylate + CO2. Its pathway is quinol/quinone metabolism; 1,4-dihydroxy-2-naphthoate biosynthesis; 1,4-dihydroxy-2-naphthoate from chorismate: step 2/7. It functions in the pathway quinol/quinone metabolism; menaquinone biosynthesis. Catalyzes the thiamine diphosphate-dependent decarboxylation of 2-oxoglutarate and the subsequent addition of the resulting succinic semialdehyde-thiamine pyrophosphate anion to isochorismate to yield 2-succinyl-5-enolpyruvyl-6-hydroxy-3-cyclohexene-1-carboxylate (SEPHCHC). The polypeptide is 2-succinyl-5-enolpyruvyl-6-hydroxy-3-cyclohexene-1-carboxylate synthase (Klebsiella pneumoniae (strain 342)).